The chain runs to 402 residues: 1-deoxy-D-xylulose 5-phosphate reductoisomerase (402 aa).

7 residues coordinate NADPH: Thr21, Gly22, Ser23, Ile24, Gly47, Asn50, and Asn127. 1-deoxy-D-xylulose 5-phosphate is bound at residue Lys128. Glu129 serves as a coordination point for NADPH. Asp151 is a Mn(2+) binding site. Ser152, Glu153, Ser177, and His200 together coordinate 1-deoxy-D-xylulose 5-phosphate. Glu153 lines the Mn(2+) pocket. An NADPH-binding site is contributed by Gly206. 1-deoxy-D-xylulose 5-phosphate is bound by residues Ser213, Asn218, Lys219, and Glu222. Glu222 is a Mn(2+) binding site.

It belongs to the DXR family. The cofactor is Mg(2+). Mn(2+) serves as cofactor.

The enzyme catalyses 2-C-methyl-D-erythritol 4-phosphate + NADP(+) = 1-deoxy-D-xylulose 5-phosphate + NADPH + H(+). Its pathway is isoprenoid biosynthesis; isopentenyl diphosphate biosynthesis via DXP pathway; isopentenyl diphosphate from 1-deoxy-D-xylulose 5-phosphate: step 1/6. Functionally, catalyzes the NADPH-dependent rearrangement and reduction of 1-deoxy-D-xylulose-5-phosphate (DXP) to 2-C-methyl-D-erythritol 4-phosphate (MEP). The protein is 1-deoxy-D-xylulose 5-phosphate reductoisomerase of Mycobacterium marinum (strain ATCC BAA-535 / M).